Consider the following 809-residue polypeptide: Glycerol-3-phosphate acyltransferase (809 aa).

The HXXXXD motif signature appears at 309 to 314 (HRSHMD).

It belongs to the GPAT/DAPAT family.

It localises to the cell inner membrane. The enzyme catalyses sn-glycerol 3-phosphate + an acyl-CoA = a 1-acyl-sn-glycero-3-phosphate + CoA. The protein operates within phospholipid metabolism; CDP-diacylglycerol biosynthesis; CDP-diacylglycerol from sn-glycerol 3-phosphate: step 1/3. The sequence is that of Glycerol-3-phosphate acyltransferase from Shewanella oneidensis (strain ATCC 700550 / JCM 31522 / CIP 106686 / LMG 19005 / NCIMB 14063 / MR-1).